The chain runs to 158 residues: Transcription elongation factor GreA (158 aa).

It belongs to the GreA/GreB family.

Its function is as follows. Necessary for efficient RNA polymerase transcription elongation past template-encoded arresting sites. The arresting sites in DNA have the property of trapping a certain fraction of elongating RNA polymerases that pass through, resulting in locked ternary complexes. Cleavage of the nascent transcript by cleavage factors such as GreA or GreB allows the resumption of elongation from the new 3'terminus. GreA releases sequences of 2 to 3 nucleotides. In Allorhizobium ampelinum (strain ATCC BAA-846 / DSM 112012 / S4) (Agrobacterium vitis (strain S4)), this protein is Transcription elongation factor GreA.